A 494-amino-acid polypeptide reads, in one-letter code: Alpha-amylase-related protein (494 aa).

The N-terminal stretch at 1 to 20 is a signal peptide; that stretch reads MFKFALALTLCLAGASLSLA. Q21 is modified (pyrrolidone carboxylic acid). An intrachain disulfide couples C48 to C104. N118, Q169, and D178 together coordinate Ca(2+). A disulfide bridge connects residues C157 and C171. R206 is a chloride binding site. D208 acts as the Nucleophile in catalysis. A Ca(2+)-binding site is contributed by H212. E245 serves as the catalytic Proton donor. Residues N308 and R343 each contribute to the chloride site. 3 cysteine pairs are disulfide-bonded: C376/C382, C418/C441, and C448/C460.

The protein belongs to the glycosyl hydrolase 13 family. In terms of assembly, monomer. It depends on Ca(2+) as a cofactor. Chloride serves as cofactor.

It is found in the secreted. It catalyses the reaction Endohydrolysis of (1-&gt;4)-alpha-D-glucosidic linkages in polysaccharides containing three or more (1-&gt;4)-alpha-linked D-glucose units.. In Drosophila dossoui (Fruit fly), this protein is Alpha-amylase-related protein (Amyrel).